We begin with the raw amino-acid sequence, 516 residues long: Putative fatty acyl-CoA reductase CG8306 (516 aa).

Helical transmembrane passes span 356–376 (WVFR…LDLV), 471–491 (ILLG…FKLI), and 496–516 (GIST…FGLL).

It belongs to the fatty acyl-CoA reductase family.

The protein localises to the membrane. It carries out the reaction a long-chain fatty acyl-CoA + 2 NADPH + 2 H(+) = a long-chain primary fatty alcohol + 2 NADP(+) + CoA. Its function is as follows. Catalyzes the reduction of C16 or C18 fatty acyl-CoA to fatty alcohols. This is Putative fatty acyl-CoA reductase CG8306 from Drosophila melanogaster (Fruit fly).